The chain runs to 88 residues: MIKNAFISFQEKKEENRGSVEFQVLSFTNKIRRLTSHLELHRKDFLSQRGLRKILGKRQRLLAYLSKKNRVRYKELINQLNIRELKTR.

This sequence belongs to the universal ribosomal protein uS15 family. As to quaternary structure, part of the 30S ribosomal subunit.

Its subcellular location is the plastid. The protein localises to the chloroplast. The protein is Small ribosomal subunit protein uS15c (rps15) of Arabis hirsuta (Hairy rock-cress).